We begin with the raw amino-acid sequence, 783 residues long: Transcription factor E4F1 (783 aa).

The required for ubiquitin ligase activity stretch occupies residues 40-84 (GFLGLPAPFSEEDEDDVHRCGRCQVEFTALEDFVQHKIQKTCHRA). Ser49 is modified (phosphoserine). Residues 185–264 (LLVNKEGRYV…GKSFRESGAL (80 aa)) are mediates dimerization, DNA-binding, transcription repression of CCNA2 and interaction with HMGA2. 2 consecutive C2H2-type zinc fingers follow at residues 193–215 (YVCM…MVTH) and 221–243 (HECK…HRRH). Residues 249-273 (YKCAKCGKSFRESGALTRHLKSLTP) form a C2H2-type 3; degenerate zinc finger. The segment at 368 to 565 (NLLHQAMQNS…REKGSLVRHV (198 aa)) is mediates interaction with CDKN2A. The interval 386 to 407 (GEESALEPAPPSGSSPQCLGDG) is disordered. 5 C2H2-type zinc fingers span residues 434–456 (HPCP…KRGH), 462–484 (FTCT…QEVH), 490–512 (FRCG…RRVH), 518–540 (FPCP…FRTH), and 546–568 (HVCQ…VRHH). The segment at 434–598 (HPCPQCSETF…LNRHLRTKGG (165 aa)) is interaction with BMI1. A mediates interaction with TP53 region spans residues 520–579 (CPQCGKRYKTKNAQQVHFRTHLEEKPHVCQFCSRGFREKGSLVRHVRHHTGEKPFKCYKC). The segment at 574 to 596 (FKCYKCGRGFAEHGTLNRHLRTK) adopts a C2H2-type 9; degenerate zinc-finger fold. Residues 574-596 (FKCYKCGRGFAEHGTLNRHLRTK) are mediates interaction with RASSF1.

As to quaternary structure, homodimer; binds DNA as a dimer. Forms a complex with CDKN2A and TP53. Interacts with HDAC1, HMGA2 and RASSF1. Interactions with TP53, RB1, ANP32A and probably BMI1 and FHL2 regulate E4F1 activity. Post-translationally, phosphorylated; phosphorylation is cell cycle-dependent and regulates DNA-binding activity and function. In terms of processing, may be sumoylated by UBE2I upon interaction with CDKN2A. In terms of tissue distribution, ubiquitously expressed.

It is found in the nucleus. It localises to the nucleoplasm. The protein localises to the cytoplasm. The catalysed reaction is S-ubiquitinyl-[E2 ubiquitin-conjugating enzyme]-L-cysteine + [acceptor protein]-L-lysine = [E2 ubiquitin-conjugating enzyme]-L-cysteine + N(6)-ubiquitinyl-[acceptor protein]-L-lysine.. The protein operates within protein modification; protein ubiquitination. Functionally, may function as a transcriptional repressor. May also function as a ubiquitin ligase mediating ubiquitination of chromatin-associated TP53. Functions in cell survival and proliferation through control of the cell cycle. Functions in the p53 and pRB tumor suppressor pathways and regulates the cyclin CCNA2 transcription. This chain is Transcription factor E4F1 (E4f1), found in Mus musculus (Mouse).